The primary structure comprises 205 residues: High frequency lysogenization protein HflD homolog (205 aa).

It belongs to the HflD family.

It is found in the cytoplasm. It localises to the cell inner membrane. This chain is High frequency lysogenization protein HflD homolog, found in Vibrio parahaemolyticus serotype O3:K6 (strain RIMD 2210633).